The chain runs to 533 residues: Ribonuclease III domain-containing protein RNC1, chloroplastic (533 aa).

Residues 1–30 constitute a chloroplast transit peptide; the sequence is MAPPAMAFQALALGPLPLPLPAARRRRRVR. Disordered stretches follow at residues 31–57 and 66–85; these read VLAV…NSPS and RKKA…ILKP. Positions 39 to 53 are enriched in pro residues; sequence TPPPPPSPSSPPEPA. Residues 69–82 show a composition bias toward basic residues; sequence AVSPKKKHPPRRFI. RNase III domains are found at residues 164–279 and 411–511; these read LLYL…LCFG and EHPR…CVYG.

Interacts with RNA. Part of large ribonucleo-protein particles that contain CAF1 and/or CAF2.

It localises to the plastid. The protein resides in the chloroplast. Functionally, binds specific group II introns in chloroplasts and facilitates their splicing. Acts on both subgroup IIA and subgroup IIB introns. The substrates of the subgroup II also require the CRM domain proteins CAF1 or CAF2. Binds both single-stranded and double-stranded RNA non-specifically, but lacks endonuclease activity. Required for plastid ribosome biogenesis. This Oryza sativa subsp. japonica (Rice) protein is Ribonuclease III domain-containing protein RNC1, chloroplastic.